The sequence spans 66 residues: MPT51 antigen (66 aa).

The first 38 residues, 1–38 (MTVVRGVSALLRVFCIAMLAAGLGVALQPAAVTGAARA), serve as a signal peptide directing secretion.

The protein belongs to the mycobacterial A85 antigen family. Homodimer.

The protein localises to the secreted. In terms of biological role, may have a role in host tissue attachment, whereby ligands may include the serum protein fibronectin and small sugars. This Mycobacterium avium protein is MPT51 antigen (mpt51).